A 650-amino-acid polypeptide reads, in one-letter code: DNA gyrase subunit B (650 aa).

The Toprim domain maps to 429–543 (NELFIVEGDS…AGYVYIAQPP (115 aa)). Mg(2+) is bound by residues E435, D508, and D510.

This sequence belongs to the type II topoisomerase GyrB family. In terms of assembly, heterotetramer, composed of two GyrA and two GyrB chains. In the heterotetramer, GyrA contains the active site tyrosine that forms a transient covalent intermediate with DNA, while GyrB binds cofactors and catalyzes ATP hydrolysis. It depends on Mg(2+) as a cofactor. Requires Mn(2+) as cofactor. The cofactor is Ca(2+).

The protein resides in the cytoplasm. It catalyses the reaction ATP-dependent breakage, passage and rejoining of double-stranded DNA.. In terms of biological role, a type II topoisomerase that negatively supercoils closed circular double-stranded (ds) DNA in an ATP-dependent manner to modulate DNA topology and maintain chromosomes in an underwound state. Negative supercoiling favors strand separation, and DNA replication, transcription, recombination and repair, all of which involve strand separation. Also able to catalyze the interconversion of other topological isomers of dsDNA rings, including catenanes and knotted rings. Type II topoisomerases break and join 2 DNA strands simultaneously in an ATP-dependent manner. This Streptococcus pyogenes serotype M1 protein is DNA gyrase subunit B.